The chain runs to 429 residues: MTRSDELFEQAKKTIPGGVNSPVRAFSGVGGSPRFIEKADGAYIFDADGKKYIDYVGSWGPMILGHNHPKIREAVLKAVENGLSFGAPTELEITMAEKVIEMVPSIEQVRMVSSGTEATMSAIRLARGFTNRDKILKFEGCYHGHADCLLVKAGSGALTLGQPSSPGIPEDFAKHTLTATYNDLDSVKAIFEQYPEEISCIIIEPVAGNMNCIPPIDGFLQGLRAICDQYGALMIIDEVMTGFRVSKSGAQGHYGVTPDLTTLGKVIGGGMPVGAFGGRKDVMQFIAPTGPVYQAGTLSGNPIAMSAGLAQMEALCEEGVYEQLAAKTQYIAEGFKAAANKHGIPMAINYVGGMFGFFFTSEETVTNFAQVTKCDTALFAEFYHMMLDEGVYLAPSAYEAGFLSLAHGEEELEATLAAADRVFAKLAKA.

Lysine 265 bears the N6-(pyridoxal phosphate)lysine mark.

It belongs to the class-III pyridoxal-phosphate-dependent aminotransferase family. HemL subfamily. In terms of assembly, homodimer. Pyridoxal 5'-phosphate is required as a cofactor.

Its subcellular location is the cytoplasm. The enzyme catalyses (S)-4-amino-5-oxopentanoate = 5-aminolevulinate. The protein operates within porphyrin-containing compound metabolism; protoporphyrin-IX biosynthesis; 5-aminolevulinate from L-glutamyl-tRNA(Glu): step 2/2. This chain is Glutamate-1-semialdehyde 2,1-aminomutase, found in Shewanella pealeana (strain ATCC 700345 / ANG-SQ1).